Consider the following 1755-residue polypeptide: Transposon Ty1-JR2 Gag-Pol polyprotein (1755 aa).

The segment covering 1 to 16 (MESQQLSQHSHISHGS) has biased composition (low complexity). Disordered regions lie at residues 1–93 (MESQ…MMTQ), 126–173 (PQSQ…RPPP), and 352–421 (GSRN…SKST). 3 stretches are compositionally biased toward polar residues: residues 48–60 (TKAN…TPAS), 71–93 (SPQT…MMTQ), and 127–152 (QSQF…GNTF). The segment covering 153–165 (TDSSSADSDMTST) has biased composition (low complexity). Residues 299-401 (NNGIHINNKV…NSKSKTARAH (103 aa)) are RNA-binding. Over residues 402-418 (NVSTSNNSPSTDNDSIS) the composition is skewed to low complexity. A Phosphoserine modification is found at Ser416. The active-site For protease activity; shared with dimeric partner is the Asp461. The segment at 583 to 640 (NVHTSESTRKYPYPFIHRMLAHANAQTIRYSLKNNTITYFNESDVDWSSAIDYQCPDC) is integrase-type zinc finger-like. In terms of domain architecture, Integrase catalytic spans 660–835 (NSYEPFQYLH…AGLDISTLLP (176 aa)). 2 residues coordinate Mg(2+): Asp671 and Asp736. Disordered stretches follow at residues 956–1087 (SKAV…ETEK), 1092–1111 (RSPS…NIVP), and 1130–1186 (DLPL…EDNE). A compositionally biased stretch (low complexity) spans 960–969 (SPTDSTPPST). The span at 1005-1015 (STPQISNIEST) shows a compositional bias: polar residues. Residues 1038 to 1053 (ESSHASKSKDFRHSDS) are compositionally biased toward basic and acidic residues. 2 stretches are compositionally biased toward polar residues: residues 1054–1082 (YSEN…QISD) and 1101–1111 (PENNSSHNIVP). Residues 1178 to 1212 (KKRSLEDNETEIKVSRDTWNTKNMRSLEPPRSKKR) carry the Bipartite nuclear localization signal motif. A Reverse transcriptase Ty1/copia-type domain is found at 1338–1476 (NNYYITQLDI…DILGLEIKYQ (139 aa)). 6 residues coordinate Mg(2+): Asp1346, Asp1427, Asp1428, Asp1610, Glu1652, and Asp1685. The 143-residue stretch at 1610 to 1752 (DASYGNQPYY…IKTFKLLTNK (143 aa)) folds into the RNase H Ty1/copia-type domain.

In terms of assembly, the capsid protein forms a homotrimer, from which the VLPs are assembled. The protease is a homodimer, whose active site consists of two apposed aspartic acid residues. In terms of processing, initially, virus-like particles (VLPs) are composed of the structural unprocessed proteins Gag and Gag-Pol, and also contain the host initiator methionine tRNA (tRNA(i)-Met) which serves as a primer for minus-strand DNA synthesis, and a dimer of genomic Ty RNA. Processing of the polyproteins occurs within the particle and proceeds by an ordered pathway, called maturation. First, the protease (PR) is released by autocatalytic cleavage of the Gag-Pol polyprotein yielding capsid protein p45 and a Pol-p154 precursor protein. This cleavage is a prerequisite for subsequent processing of Pol-p154 at the remaining sites to release the mature structural and catalytic proteins. Maturation takes place prior to the RT reaction and is required to produce transposition-competent VLPs.

The protein resides in the cytoplasm. It is found in the nucleus. It carries out the reaction DNA(n) + a 2'-deoxyribonucleoside 5'-triphosphate = DNA(n+1) + diphosphate. The catalysed reaction is Endonucleolytic cleavage to 5'-phosphomonoester.. Capsid protein (CA) is the structural component of the virus-like particle (VLP), forming the shell that encapsulates the retrotransposons dimeric RNA genome. The particles are assembled from trimer-clustered units and there are holes in the capsid shells that allow for the diffusion of macromolecules. CA also has nucleocapsid-like chaperone activity, promoting primer tRNA(i)-Met annealing to the multipartite primer-binding site (PBS), dimerization of Ty1 RNA and initiation of reverse transcription. Its function is as follows. The aspartyl protease (PR) mediates the proteolytic cleavages of the Gag and Gag-Pol polyproteins after assembly of the VLP. In terms of biological role, reverse transcriptase/ribonuclease H (RT) is a multifunctional enzyme that catalyzes the conversion of the retro-elements RNA genome into dsDNA within the VLP. The enzyme displays a DNA polymerase activity that can copy either DNA or RNA templates, and a ribonuclease H (RNase H) activity that cleaves the RNA strand of RNA-DNA heteroduplexes during plus-strand synthesis and hydrolyzes RNA primers. The conversion leads to a linear dsDNA copy of the retrotransposon that includes long terminal repeats (LTRs) at both ends. Functionally, integrase (IN) targets the VLP to the nucleus, where a subparticle preintegration complex (PIC) containing at least integrase and the newly synthesized dsDNA copy of the retrotransposon must transit the nuclear membrane. Once in the nucleus, integrase performs the integration of the dsDNA into the host genome. The protein is Transposon Ty1-JR2 Gag-Pol polyprotein (TY1B-JR2) of Saccharomyces cerevisiae (strain ATCC 204508 / S288c) (Baker's yeast).